Reading from the N-terminus, the 230-residue chain is Orotidine 5'-phosphate decarboxylase (230 aa).

Substrate contacts are provided by residues aspartate 10, lysine 32, 59 to 68 (DLKYHDIPNT), threonine 119, arginine 180, glutamine 189, glycine 209, and arginine 210. Lysine 61 functions as the Proton donor in the catalytic mechanism.

It belongs to the OMP decarboxylase family. Type 1 subfamily. As to quaternary structure, homodimer.

It catalyses the reaction orotidine 5'-phosphate + H(+) = UMP + CO2. It functions in the pathway pyrimidine metabolism; UMP biosynthesis via de novo pathway; UMP from orotate: step 2/2. Its function is as follows. Catalyzes the decarboxylation of orotidine 5'-monophosphate (OMP) to uridine 5'-monophosphate (UMP). The chain is Orotidine 5'-phosphate decarboxylase from Haemophilus influenzae (strain PittEE).